Consider the following 328-residue polypeptide: Nucleotide-binding protein Blon_1085/BLIJ_1109 (328 aa).

A disordered region spans residues 1–33; sequence MSQQTTIRDTGEAAATNAPANSATSTSTPDNQP. Positions 13–29 are enriched in low complexity; the sequence is AAATNAPANSATSTSTP. 46–53 contacts ATP; it reads GMSGAGRS. Residue 101–104 coordinates GTP; the sequence is DVRS.

The protein belongs to the RapZ-like family.

Displays ATPase and GTPase activities. The chain is Nucleotide-binding protein Blon_1085/BLIJ_1109 from Bifidobacterium longum subsp. infantis (strain ATCC 15697 / DSM 20088 / JCM 1222 / NCTC 11817 / S12).